A 355-amino-acid chain; its full sequence is Putative cyclin-A3-1 (355 aa).

It belongs to the cyclin family. Cyclin AB subfamily.

This chain is Putative cyclin-A3-1 (CYCA3-1), found in Arabidopsis thaliana (Mouse-ear cress).